Here is a 441-residue protein sequence, read N- to C-terminus: Velvet complex subunit B (441 aa).

The Velvet domain occupies 1-173 (MSTLGQGDFE…SDQGVRLRLR (173 aa)). Disordered stretches follow at residues 200 to 220 (GYLP…PHHL), 234 to 295 (RSRS…ETDT), and 341 to 396 (MPSP…PSYA). 2 stretches are compositionally biased toward low complexity: residues 272–283 (DGASPDSPHPSS) and 361–375 (PAGA…FSPG).

It belongs to the velvet family. VelB subfamily. Component of the heterotrimeric velvet complex composed of laeA, veA and velB; VeA acting as a bridging protein between laeA and velB.

The protein resides in the nucleus. It localises to the cytoplasm. Functionally, component of the velvet transcription factor complex that controls sexual/asexual developmental ratio in response to light, promoting sexual development in the darkness while stimulating asexual sporulation under illumination. The velvet complex acts as a global regulator for secondary metabolite gene expression and is required for the production of chaetoglobosin A. This chain is Velvet complex subunit B, found in Chaetomium globosum (strain ATCC 6205 / CBS 148.51 / DSM 1962 / NBRC 6347 / NRRL 1970) (Soil fungus).